We begin with the raw amino-acid sequence, 260 residues long: Thaumatin-like protein 1 (260 aa).

A signal peptide spans 1 to 32 (MIITVLHSHVSFYFIILSFLFFHALHLVGSDG). Cystine bridges form between Cys41–Cys255, Cys89–Cys100, Cys105–Cys112, Cys166–Cys245, Cys171–Cys228, Cys179–Cys191, Cys195–Cys204, and Cys205–Cys215.

It belongs to the thaumatin family. As to expression, expressed only in roots.

Involved in local responses of roots to colonization by non-pathogenic plant growth-promoting rhizobacteria (PGPR) fluorescent Pseudomonas spp., but seems to not being required for the establishment of subsequent induced systemic resistance (ISR). This Arabidopsis thaliana (Mouse-ear cress) protein is Thaumatin-like protein 1.